The following is a 210-amino-acid chain: ATP-dependent Clp protease proteolytic subunit (210 aa).

Ser114 (nucleophile) is an active-site residue. The active site involves His139.

Belongs to the peptidase S14 family. In terms of assembly, fourteen ClpP subunits assemble into 2 heptameric rings which stack back to back to give a disk-like structure with a central cavity, resembling the structure of eukaryotic proteasomes.

The protein resides in the cytoplasm. The catalysed reaction is Hydrolysis of proteins to small peptides in the presence of ATP and magnesium. alpha-casein is the usual test substrate. In the absence of ATP, only oligopeptides shorter than five residues are hydrolyzed (such as succinyl-Leu-Tyr-|-NHMec, and Leu-Tyr-Leu-|-Tyr-Trp, in which cleavage of the -Tyr-|-Leu- and -Tyr-|-Trp bonds also occurs).. Cleaves peptides in various proteins in a process that requires ATP hydrolysis. Has a chymotrypsin-like activity. Plays a major role in the degradation of misfolded proteins. The sequence is that of ATP-dependent Clp protease proteolytic subunit from Janthinobacterium sp. (strain Marseille) (Minibacterium massiliensis).